The following is a 95-amino-acid chain: Aspartyl/glutamyl-tRNA(Asn/Gln) amidotransferase subunit C (95 aa).

This sequence belongs to the GatC family. In terms of assembly, heterotrimer of A, B and C subunits.

The enzyme catalyses L-glutamyl-tRNA(Gln) + L-glutamine + ATP + H2O = L-glutaminyl-tRNA(Gln) + L-glutamate + ADP + phosphate + H(+). It carries out the reaction L-aspartyl-tRNA(Asn) + L-glutamine + ATP + H2O = L-asparaginyl-tRNA(Asn) + L-glutamate + ADP + phosphate + 2 H(+). In terms of biological role, allows the formation of correctly charged Asn-tRNA(Asn) or Gln-tRNA(Gln) through the transamidation of misacylated Asp-tRNA(Asn) or Glu-tRNA(Gln) in organisms which lack either or both of asparaginyl-tRNA or glutaminyl-tRNA synthetases. The reaction takes place in the presence of glutamine and ATP through an activated phospho-Asp-tRNA(Asn) or phospho-Glu-tRNA(Gln). This Beijerinckia indica subsp. indica (strain ATCC 9039 / DSM 1715 / NCIMB 8712) protein is Aspartyl/glutamyl-tRNA(Asn/Gln) amidotransferase subunit C.